Here is a 303-residue protein sequence, read N- to C-terminus: tRNA pseudouridine synthase B (303 aa).

The active-site Nucleophile is the Asp-47.

The protein belongs to the pseudouridine synthase TruB family. Type 1 subfamily.

It carries out the reaction uridine(55) in tRNA = pseudouridine(55) in tRNA. Functionally, responsible for synthesis of pseudouridine from uracil-55 in the psi GC loop of transfer RNAs. The protein is tRNA pseudouridine synthase B of Legionella pneumophila subsp. pneumophila (strain Philadelphia 1 / ATCC 33152 / DSM 7513).